The following is a 469-amino-acid chain: ATP synthase subunit beta (469 aa).

Gly-156 to Thr-163 is an ATP binding site.

The protein belongs to the ATPase alpha/beta chains family. F-type ATPases have 2 components, CF(1) - the catalytic core - and CF(0) - the membrane proton channel. CF(1) has five subunits: alpha(3), beta(3), gamma(1), delta(1), epsilon(1). CF(0) has three main subunits: a(1), b(2) and c(9-12). The alpha and beta chains form an alternating ring which encloses part of the gamma chain. CF(1) is attached to CF(0) by a central stalk formed by the gamma and epsilon chains, while a peripheral stalk is formed by the delta and b chains.

The protein localises to the cell membrane. The enzyme catalyses ATP + H2O + 4 H(+)(in) = ADP + phosphate + 5 H(+)(out). Functionally, produces ATP from ADP in the presence of a proton gradient across the membrane. The catalytic sites are hosted primarily by the beta subunits. In Lactococcus lactis subsp. cremoris (strain SK11), this protein is ATP synthase subunit beta.